Reading from the N-terminus, the 121-residue chain is UPF0102 protein DSY2577 (121 aa).

The protein belongs to the UPF0102 family.

This is UPF0102 protein DSY2577 from Desulfitobacterium hafniense (strain Y51).